Consider the following 261-residue polypeptide: Ribonuclease HII (261 aa).

Residues 71–259 enclose the RNase H type-2 domain; it reads KYIAGVDEVG…VKEAKLHFDS (189 aa). Residues Asp-77, Glu-78, and Asp-169 each coordinate a divalent metal cation.

Belongs to the RNase HII family. The cofactor is Mn(2+). Requires Mg(2+) as cofactor.

It localises to the cytoplasm. The enzyme catalyses Endonucleolytic cleavage to 5'-phosphomonoester.. In terms of biological role, endonuclease that specifically degrades the RNA of RNA-DNA hybrids. This chain is Ribonuclease HII, found in Listeria monocytogenes serotype 4b (strain F2365).